A 261-amino-acid chain; its full sequence is NAD-capped RNA hydrolase NudC (261 aa).

A substrate-binding site is contributed by Arg74. Zn(2+) is bound by residues Cys103, Cys106, Cys121, and Cys124. Tyr129 contributes to the substrate binding site. A Nudix hydrolase domain is found at 130-253 (PRIFPCIIVA…TIARALIEQT (124 aa)). Residues Ala163, Glu179, and Glu183 each contribute to the a divalent metal cation site. Residues 164–185 (GFVEVGETLEQCVAREVKEETG) carry the Nudix box motif. Substrate is bound at residue 197–204 (QPWAFPSS). Glu224 contributes to the a divalent metal cation binding site. Position 246 (Ala246) interacts with substrate.

Belongs to the Nudix hydrolase family. NudC subfamily. In terms of assembly, homodimer. It depends on Mg(2+) as a cofactor. Mn(2+) serves as cofactor. Zn(2+) is required as a cofactor.

The enzyme catalyses a 5'-end NAD(+)-phospho-ribonucleoside in mRNA + H2O = a 5'-end phospho-adenosine-phospho-ribonucleoside in mRNA + beta-nicotinamide D-ribonucleotide + 2 H(+). The catalysed reaction is NAD(+) + H2O = beta-nicotinamide D-ribonucleotide + AMP + 2 H(+). It catalyses the reaction NADH + H2O = reduced beta-nicotinamide D-ribonucleotide + AMP + 2 H(+). MRNA decapping enzyme that specifically removes the nicotinamide adenine dinucleotide (NAD) cap from a subset of mRNAs by hydrolyzing the diphosphate linkage to produce nicotinamide mononucleotide (NMN) and 5' monophosphate mRNA. The NAD-cap is present at the 5'-end of some mRNAs and stabilizes RNA against 5'-processing. Has preference for mRNAs with a 5'-end purine. Catalyzes the hydrolysis of a broad range of dinucleotide pyrophosphates. The chain is NAD-capped RNA hydrolase NudC from Vibrio vulnificus (strain CMCP6).